The chain runs to 210 residues: Outer-membrane lipoprotein carrier protein (210 aa).

The signal sequence occupies residues 1-22; the sequence is MRAFKWALAIGATLALPLTAQA.

The protein belongs to the LolA family. In terms of assembly, monomer.

Its subcellular location is the periplasm. Functionally, participates in the translocation of lipoproteins from the inner membrane to the outer membrane. Only forms a complex with a lipoprotein if the residue after the N-terminal Cys is not an aspartate (The Asp acts as a targeting signal to indicate that the lipoprotein should stay in the inner membrane). This chain is Outer-membrane lipoprotein carrier protein, found in Chromohalobacter salexigens (strain ATCC BAA-138 / DSM 3043 / CIP 106854 / NCIMB 13768 / 1H11).